The chain runs to 494 residues: Glutamyl-tRNA reductase (494 aa).

Residues 58–61, S118, 123–125, and Q129 each bind substrate; these read TCNR and EQQ. The active-site Nucleophile is the C59. 205 to 210 is a binding site for NADP(+); sequence GAGAMA. Residues 448–494 form a disordered region; sequence KGANAGSGQRKKQKPQENRVSTARAVYRSTYQDLTQASTPGGKDDDQ. The segment covering 476-486 has biased composition (polar residues); it reads STYQDLTQAST.

Belongs to the glutamyl-tRNA reductase family. Homodimer.

It carries out the reaction (S)-4-amino-5-oxopentanoate + tRNA(Glu) + NADP(+) = L-glutamyl-tRNA(Glu) + NADPH + H(+). Its pathway is porphyrin-containing compound metabolism; protoporphyrin-IX biosynthesis; 5-aminolevulinate from L-glutamyl-tRNA(Glu): step 1/2. Catalyzes the NADPH-dependent reduction of glutamyl-tRNA(Glu) to glutamate 1-semialdehyde (GSA). In Corynebacterium urealyticum (strain ATCC 43042 / DSM 7109), this protein is Glutamyl-tRNA reductase.